Here is a 166-residue protein sequence, read N- to C-terminus: MTESTSRRPAYARLLDRAVHILAVRDHSEQELRRKLAAPIMGKNGPEEIDATAEDYERVIAWCHEHGYLDDSRFVARFIASRSRKGYGPARIRQELNQKGISREATEKAMRECDIDWCALARDQATRKYGEPLPTVFSEKVKIQRFLLYRGYLMEDIQDIWRNFAD.

This sequence belongs to the RecX family.

The protein localises to the cytoplasm. Functionally, modulates RecA activity. This is Regulatory protein RecX from Shigella boydii serotype 18 (strain CDC 3083-94 / BS512).